We begin with the raw amino-acid sequence, 656 residues long: Acetyl-coenzyme A synthetase (656 aa).

CoA contacts are provided by residues 198–201 and Thr316; that span reads RGGR. ATP is bound by residues 392–394, 416–421, Asp507, and Arg522; these read GEP and DTFWQT. Position 530 (Ser530) interacts with CoA. ATP is bound at residue Arg533. Val544, His546, and Val549 together coordinate Mg(2+). Arg591 contacts CoA. Lys616 is subject to N6-acetyllysine.

This sequence belongs to the ATP-dependent AMP-binding enzyme family. The cofactor is Mg(2+). In terms of processing, acetylated. Deacetylation by the SIR2-homolog deacetylase activates the enzyme.

It catalyses the reaction acetate + ATP + CoA = acetyl-CoA + AMP + diphosphate. Its function is as follows. Catalyzes the conversion of acetate into acetyl-CoA (AcCoA), an essential intermediate at the junction of anabolic and catabolic pathways. AcsA undergoes a two-step reaction. In the first half reaction, AcsA combines acetate with ATP to form acetyl-adenylate (AcAMP) intermediate. In the second half reaction, it can then transfer the acetyl group from AcAMP to the sulfhydryl group of CoA, forming the product AcCoA. In Rhodobacter capsulatus (strain ATCC BAA-309 / NBRC 16581 / SB1003), this protein is Acetyl-coenzyme A synthetase.